The primary structure comprises 270 residues: Glutamate racemase (270 aa).

Substrate is bound by residues 14-15 (DS) and 46-47 (YG). The active-site Proton donor/acceptor is the cysteine 77. 78 to 79 (NT) serves as a coordination point for substrate. Cysteine 189 (proton donor/acceptor) is an active-site residue. Position 190–191 (190–191 (TH)) interacts with substrate.

Belongs to the aspartate/glutamate racemases family.

The enzyme catalyses L-glutamate = D-glutamate. Its pathway is cell wall biogenesis; peptidoglycan biosynthesis. Functionally, provides the (R)-glutamate required for cell wall biosynthesis. The protein is Glutamate racemase of Neisseria gonorrhoeae (strain ATCC 700825 / FA 1090).